The chain runs to 704 residues: Elongation factor G (704 aa).

The 284-residue stretch at 8-291 (DKVRNIGIMA…TVVECLPSPV (284 aa)) folds into the tr-type G domain. GTP-binding positions include 17–24 (AHIDAGKT), 90–94 (DTPGH), and 144–147 (NKMD).

Belongs to the TRAFAC class translation factor GTPase superfamily. Classic translation factor GTPase family. EF-G/EF-2 subfamily.

It localises to the cytoplasm. Functionally, catalyzes the GTP-dependent ribosomal translocation step during translation elongation. During this step, the ribosome changes from the pre-translocational (PRE) to the post-translocational (POST) state as the newly formed A-site-bound peptidyl-tRNA and P-site-bound deacylated tRNA move to the P and E sites, respectively. Catalyzes the coordinated movement of the two tRNA molecules, the mRNA and conformational changes in the ribosome. This chain is Elongation factor G, found in Prosthecochloris aestuarii (strain DSM 271 / SK 413).